A 122-amino-acid chain; its full sequence is uncharacterized protein (122 aa).

Disordered stretches follow at residues 1–30 (MGRE…DQPE) and 96–122 (FKSC…DAMG).

This is an uncharacterized protein from Homo sapiens (Human).